The following is a 66-amino-acid chain: Stress-associated endoplasmic reticulum protein 1 (66 aa).

Positions 1–33 are disordered; the sequence is MVAKQRIRMANEKHSKNITQRGNVAKTSRNAPG. Topologically, residues 1 to 38 are cytoplasmic; that stretch reads MVAKQRIRMANEKHSKNITQRGNVAKTSRNAPGEKASV. The segment covering 17–30 has biased composition (polar residues); that stretch reads NITQRGNVAKTSRN. A helical membrane pass occupies residues 39 to 59; the sequence is GPWLLALFIFVVCGSAIFQII. Over 60–66 the chain is Extracellular; it reads QSIRMGM.

Belongs to the RAMP4 family. As to quaternary structure, interacts with SEC61B, SEC61A1 and the SEC61 complex. Interacts with CANX.

It is found in the membrane. The protein localises to the endoplasmic reticulum membrane. Its function is as follows. Interacts with target proteins during their translocation into the lumen of the endoplasmic reticulum. Protects unfolded target proteins against degradation during ER stress. May facilitate glycosylation of target proteins after termination of ER stress. May modulate the use of N-glycosylation sites on target proteins. The polypeptide is Stress-associated endoplasmic reticulum protein 1 (SERP1) (Pongo abelii (Sumatran orangutan)).